The primary structure comprises 282 residues: Nucleotide-binding protein Shew_3314 (282 aa).

ATP is bound at residue 8 to 15; sequence GRSGSGKS. 56–59 serves as a coordination point for GTP; the sequence is DVRN.

Belongs to the RapZ-like family.

In terms of biological role, displays ATPase and GTPase activities. This is Nucleotide-binding protein Shew_3314 from Shewanella loihica (strain ATCC BAA-1088 / PV-4).